The primary structure comprises 458 residues: Argininosuccinate lyase (458 aa).

Belongs to the lyase 1 family. Argininosuccinate lyase subfamily.

It is found in the cytoplasm. The catalysed reaction is 2-(N(omega)-L-arginino)succinate = fumarate + L-arginine. It functions in the pathway amino-acid biosynthesis; L-arginine biosynthesis; L-arginine from L-ornithine and carbamoyl phosphate: step 3/3. The polypeptide is Argininosuccinate lyase (Neisseria meningitidis serogroup C (strain 053442)).